The following is a 247-amino-acid chain: Ribosomal RNA small subunit methyltransferase J (247 aa).

Residues 101 to 102, 117 to 118, 153 to 154, and aspartate 171 each bind S-adenosyl-L-methionine; these read RD, ER, and SS.

It belongs to the methyltransferase superfamily. RsmJ family.

It localises to the cytoplasm. It catalyses the reaction guanosine(1516) in 16S rRNA + S-adenosyl-L-methionine = N(2)-methylguanosine(1516) in 16S rRNA + S-adenosyl-L-homocysteine + H(+). Its function is as follows. Specifically methylates the guanosine in position 1516 of 16S rRNA. This is Ribosomal RNA small subunit methyltransferase J from Photorhabdus laumondii subsp. laumondii (strain DSM 15139 / CIP 105565 / TT01) (Photorhabdus luminescens subsp. laumondii).